The sequence spans 211 residues: MGKKPVVIGIAGGSGSGKTSVTRSIYEQFKGHSILMLEQDLYYKDQSHLPFEERLNTNYDHPLAFDNDYLIEHLNELLAYRPIKKPIYDYKLHTRSEEVVHVDPKDVIILEGILVLEDERLRDLMDIKLYVDTDADLRIIRRMLRDIKERGRSIDSVIEQYISVVRPMHNQFVEPTKRYADIIIPEGGQNRVAIDLMVTKIQTILEQNAIL.

12 to 19 (GGSGSGKT) provides a ligand contact to ATP.

It belongs to the uridine kinase family.

It is found in the cytoplasm. The catalysed reaction is uridine + ATP = UMP + ADP + H(+). The enzyme catalyses cytidine + ATP = CMP + ADP + H(+). Its pathway is pyrimidine metabolism; CTP biosynthesis via salvage pathway; CTP from cytidine: step 1/3. It functions in the pathway pyrimidine metabolism; UMP biosynthesis via salvage pathway; UMP from uridine: step 1/1. The chain is Uridine kinase from Bacillus licheniformis (strain ATCC 14580 / DSM 13 / JCM 2505 / CCUG 7422 / NBRC 12200 / NCIMB 9375 / NCTC 10341 / NRRL NRS-1264 / Gibson 46).